Consider the following 49-residue polypeptide: Large ribosomal subunit protein bL33A (49 aa).

Belongs to the bacterial ribosomal protein bL33 family.

The chain is Large ribosomal subunit protein bL33A (rpmG1) from Enterococcus faecalis (strain ATCC 700802 / V583).